A 546-amino-acid chain; its full sequence is Alkaline phosphatase PafA (546 aa).

A signal peptide spans 1 to 25 (MLTPKKWLLGVLVVSGMLGAQKTNA). Zn(2+) is bound by residues D38 and T79. Catalysis depends on T79, which acts as the Phosphothreonine intermediate. Substrate is bound by residues N100 and 162–164 (KDR). D305, H309, D352, H353, and H486 together coordinate Zn(2+).

It depends on Zn(2+) as a cofactor.

It is found in the periplasm. The enzyme catalyses a phosphate monoester + H2O = an alcohol + phosphate. Its activity is regulated as follows. Strongly inhibited by orthovanadate and EDTA. Also inhibited by inorganic phosphate. In terms of biological role, alkaline phosphatase with broad substrate specificity. Has phosphatase activity towards nucleotide phosphates with a preference for ATP. Active towards a great variety of phosphomonoesters with the exception of 2',3'-cyclic AMP and myo-inositol hexakisphosphate. This Elizabethkingia meningoseptica (Chryseobacterium meningosepticum) protein is Alkaline phosphatase PafA.